The sequence spans 391 residues: Ferrochelatase (391 aa).

Fe cation contacts are provided by His-196 and Glu-281.

It belongs to the ferrochelatase family.

The protein localises to the cytoplasm. The enzyme catalyses heme b + 2 H(+) = protoporphyrin IX + Fe(2+). The protein operates within porphyrin-containing compound metabolism; protoheme biosynthesis; protoheme from protoporphyrin-IX: step 1/1. Functionally, catalyzes the ferrous insertion into protoporphyrin IX. In Prochlorococcus marinus (strain NATL1A), this protein is Ferrochelatase.